A 123-amino-acid chain; its full sequence is Small ribosomal subunit protein uS12 (123 aa).

The disordered stretch occupies residues 1 to 25; sequence MPTINQLVRKPRKSRSALNKAPALQ. Position 90 is a 3-methylthioaspartic acid (aspartate 90).

Belongs to the universal ribosomal protein uS12 family. Part of the 30S ribosomal subunit. Contacts proteins S8 and S17. May interact with IF1 in the 30S initiation complex.

Functionally, with S4 and S5 plays an important role in translational accuracy. In terms of biological role, interacts with and stabilizes bases of the 16S rRNA that are involved in tRNA selection in the A site and with the mRNA backbone. Located at the interface of the 30S and 50S subunits, it traverses the body of the 30S subunit contacting proteins on the other side and probably holding the rRNA structure together. The combined cluster of proteins S8, S12 and S17 appears to hold together the shoulder and platform of the 30S subunit. The protein is Small ribosomal subunit protein uS12 of Ehrlichia canis (strain Jake).